The following is a 378-amino-acid chain: Succinyl-diaminopimelate desuccinylase (378 aa).

His-66 is a Zn(2+) binding site. Residue Asp-68 is part of the active site. Asp-100 is a Zn(2+) binding site. The active-site Proton acceptor is Glu-134. Zn(2+) is bound by residues Glu-135, Glu-163, and His-350.

This sequence belongs to the peptidase M20A family. DapE subfamily. In terms of assembly, homodimer. It depends on Zn(2+) as a cofactor. Requires Co(2+) as cofactor.

The enzyme catalyses N-succinyl-(2S,6S)-2,6-diaminopimelate + H2O = (2S,6S)-2,6-diaminopimelate + succinate. It functions in the pathway amino-acid biosynthesis; L-lysine biosynthesis via DAP pathway; LL-2,6-diaminopimelate from (S)-tetrahydrodipicolinate (succinylase route): step 3/3. Its function is as follows. Catalyzes the hydrolysis of N-succinyl-L,L-diaminopimelic acid (SDAP), forming succinate and LL-2,6-diaminopimelate (DAP), an intermediate involved in the bacterial biosynthesis of lysine and meso-diaminopimelic acid, an essential component of bacterial cell walls. This is Succinyl-diaminopimelate desuccinylase from Hydrogenovibrio crunogenus (strain DSM 25203 / XCL-2) (Thiomicrospira crunogena).